A 309-amino-acid chain; its full sequence is NADH-cytochrome b5 reductase 1 (309 aa).

A helical transmembrane segment spans residues 29-49 (EFVPYAVALTAVLAGFKLFTG). An FAD-binding FR-type domain is found at 60–165 (TEFQEFVLKE…RGPKGAMVYT (106 aa)). FAD-binding positions include 145–160 (TTLKVGDVMKVRGPKG) and 171–208 (HIGMIAGGTGITPMLQVIKAIIRNRPRNGGTDITKVDL).

It belongs to the flavoprotein pyridine nucleotide cytochrome reductase family. Monomer. Component of the 2-(3-amino-3-carboxypropyl)histidine synthase complex composed of dph1, dph2, dph3 and a NADH-dependent reductase, predominantly cbr1. The cofactor is FAD.

It localises to the mitochondrion outer membrane. The enzyme catalyses 2 Fe(III)-[cytochrome b5] + NADH = 2 Fe(II)-[cytochrome b5] + NAD(+) + H(+). It carries out the reaction 2 Fe(3+)-[Dph3] + NADH = 2 Fe(2+)-[Dph3] + NAD(+) + H(+). It participates in protein modification; peptidyl-diphthamide biosynthesis. Its function is as follows. NADH-dependent reductase for dph3 and cytochrome b5. Required for the first step of diphthamide biosynthesis, a post-translational modification of histidine which occurs in elongation factor 2. Dph1 and dph2 transfer a 3-amino-3-carboxypropyl (ACP) group from S-adenosyl-L-methionine (SAM) to a histidine residue, the reaction is assisted by a reduction system comprising dph3 and a NADH-dependent reductase, predominantly cbr1. By reducing dph3, also involved in the formation of the tRNA wobble base modification mcm5s 2U (5-methoxycarbonylmethyl-2-thiouridine), mediated by the elongator complex. The cytochrome b5/NADH cytochrome b5 reductase electron transfer system supports the catalytic activity of several sterol biosynthetic enzymes. This is NADH-cytochrome b5 reductase 1 (cbr1) from Aspergillus clavatus (strain ATCC 1007 / CBS 513.65 / DSM 816 / NCTC 3887 / NRRL 1 / QM 1276 / 107).